A 359-amino-acid polypeptide reads, in one-letter code: Glutamine synthetase (359 aa).

In terms of domain architecture, GS beta-grasp spans 28–107 (VMAEYIWIDG…VLAACYTADG (80 aa)). One can recognise a GS catalytic domain in the interval 114–359 (HRDACAKLLE…GIITETMFEH (246 aa)). Position 273 is a phosphoserine (Ser-273). The residue at position 303 (Thr-303) is a Phosphothreonine. A Phosphoserine modification is found at Ser-305.

The protein belongs to the glutamine synthetase family. Homooctamer.

It is found in the cytoplasm. The catalysed reaction is L-glutamate + NH4(+) + ATP = L-glutamine + ADP + phosphate + H(+). The chain is Glutamine synthetase (gln1) from Schizosaccharomyces pombe (strain 972 / ATCC 24843) (Fission yeast).